Consider the following 603-residue polypeptide: UvrABC system protein C (603 aa).

Positions Asp15–Ile92 constitute a GIY-YIG domain. One can recognise a UVR domain in the interval Ala197–Thr232.

The protein belongs to the UvrC family. As to quaternary structure, interacts with UvrB in an incision complex.

The protein localises to the cytoplasm. In terms of biological role, the UvrABC repair system catalyzes the recognition and processing of DNA lesions. UvrC both incises the 5' and 3' sides of the lesion. The N-terminal half is responsible for the 3' incision and the C-terminal half is responsible for the 5' incision. The polypeptide is UvrABC system protein C (Limosilactobacillus reuteri (strain DSM 20016) (Lactobacillus reuteri)).